Consider the following 356-residue polypeptide: A-type ATP synthase subunit C (356 aa).

Belongs to the V-ATPase V0D/AC39 subunit family. In terms of assembly, has multiple subunits with at least A(3), B(3), C, D, E, F, H, I and proteolipid K(x).

It localises to the cell membrane. Component of the A-type ATP synthase that produces ATP from ADP in the presence of a proton gradient across the membrane. In Thermoplasma volcanium (strain ATCC 51530 / DSM 4299 / JCM 9571 / NBRC 15438 / GSS1), this protein is A-type ATP synthase subunit C.